Consider the following 1202-residue polypeptide: Nucleolar protein 6 (1202 aa).

A disordered region spans residues 1 to 64 (MNKTKRKQQS…KKYKDNETNK (64 aa)).

Belongs to the NRAP family. In terms of assembly, part of the small subunit (SSU) processome, composed of more than 70 proteins and the RNA chaperone small nucleolar RNA (snoRNA) U3.

It localises to the nucleus. The protein resides in the nucleolus. Its subcellular location is the chromosome. Part of the small subunit (SSU) processome, first precursor of the small eukaryotic ribosomal subunit. During the assembly of the SSU processome in the nucleolus, many ribosome biogenesis factors, an RNA chaperone and ribosomal proteins associate with the nascent pre-rRNA and work in concert to generate RNA folding, modifications, rearrangements and cleavage as well as targeted degradation of pre-ribosomal RNA by the RNA exosome. The protein is Nucleolar protein 6 of Drosophila willistoni (Fruit fly).